A 549-amino-acid polypeptide reads, in one-letter code: Glucose-6-phosphate isomerase (549 aa).

The active-site Proton donor is the Glu352. Active-site residues include His383 and Lys511.

It belongs to the GPI family.

Its subcellular location is the cytoplasm. It catalyses the reaction alpha-D-glucose 6-phosphate = beta-D-fructose 6-phosphate. It functions in the pathway carbohydrate biosynthesis; gluconeogenesis. Its pathway is carbohydrate degradation; glycolysis; D-glyceraldehyde 3-phosphate and glycerone phosphate from D-glucose: step 2/4. In terms of biological role, catalyzes the reversible isomerization of glucose-6-phosphate to fructose-6-phosphate. This is Glucose-6-phosphate isomerase from Methylocella silvestris (strain DSM 15510 / CIP 108128 / LMG 27833 / NCIMB 13906 / BL2).